The chain runs to 252 residues: Flagellar L-ring protein (252 aa).

The signal sequence occupies residues M1–G25. C26 is lipidated: N-palmitoyl cysteine. C26 carries the S-diacylglycerol cysteine lipid modification.

Belongs to the FlgH family. In terms of assembly, the basal body constitutes a major portion of the flagellar organelle and consists of four rings (L,P,S, and M) mounted on a central rod.

The protein resides in the cell outer membrane. It localises to the bacterial flagellum basal body. Assembles around the rod to form the L-ring and probably protects the motor/basal body from shearing forces during rotation. This chain is Flagellar L-ring protein, found in Nitrobacter winogradskyi (strain ATCC 25391 / DSM 10237 / CIP 104748 / NCIMB 11846 / Nb-255).